The primary structure comprises 259 residues: Putative zinc metalloprotease Rip2 (259 aa).

Transmembrane regions (helical) follow at residues 14–34 (PIFL…WLAG) and 39–59 (PLAY…SLCL). Residue His-60 participates in Zn(2+) binding. Glu-61 is a catalytic residue. Position 64 (His-64) interacts with Zn(2+). A run of 4 helical transmembrane segments spans residues 97 to 117 (GLPM…AVYV), 128 to 148 (TLVS…LLAA), 156 to 176 (IHAV…TALV), and 215 to 235 (LVLF…YWLF).

This sequence belongs to the peptidase M50B family. Zn(2+) is required as a cofactor.

It localises to the cell membrane. The sequence is that of Putative zinc metalloprotease Rip2 (rip2) from Mycobacterium tuberculosis (strain ATCC 35801 / TMC 107 / Erdman).